Reading from the N-terminus, the 144-residue chain is Small ribosomal subunit protein eS12z (144 aa).

N-acetylserine is present on Ser2.

The protein belongs to the eukaryotic ribosomal protein eS12 family.

In Arabidopsis thaliana (Mouse-ear cress), this protein is Small ribosomal subunit protein eS12z (RPS12A).